Here is a 593-residue protein sequence, read N- to C-terminus: Inactive metallocarboxypeptidase ECM14 (593 aa).

The N-terminal stretch at Met-1–Ala-22 is a signal peptide. The propeptide occupies Ile-23 to Asn-175. 2 disordered regions span residues Val-75–Ala-98 and Tyr-172–His-202. The segment covering Arg-78–Lys-88 has biased composition (basic and acidic residues). Residues Arg-188–Ser-199 show a composition bias toward polar residues. Residues Asp-211–Leu-537 enclose the Peptidase M14 domain. Zn(2+)-binding residues include His-276 and Glu-279. Residues His-276 to Glu-279, Arg-334, and Asp-351 to Arg-352 each bind substrate. Cys-345 and Cys-368 are joined by a disulfide. Asn-361 carries N-linked (GlcNAc...) asparagine glycosylation. Residue His-408 coordinates Zn(2+). Ser-409 to Tyr-410 is a binding site for substrate. The interval Asp-548–Glu-593 is disordered.

This sequence belongs to the peptidase M14 family. Zn(2+) serves as cofactor.

The protein resides in the vacuole. It localises to the secreted. Inactive carboxypeptidase that may play a role in cell wall organization and biogenesis. The polypeptide is Inactive metallocarboxypeptidase ECM14 (ECM14) (Arthroderma otae (strain ATCC MYA-4605 / CBS 113480) (Microsporum canis)).